A 239-amino-acid polypeptide reads, in one-letter code: Sugar fermentation stimulation protein homolog (239 aa).

This sequence belongs to the SfsA family.

The chain is Sugar fermentation stimulation protein homolog from Methylobacterium sp. (strain 4-46).